Here is a 374-residue protein sequence, read N- to C-terminus: Potassium channel subfamily K member 9 (374 aa).

The Cytoplasmic segment spans residues 1-8; the sequence is MKRQNVRT. A helical membrane pass occupies residues 9-29; that stretch reads LSLIICTFTYLLVGAAVFDAL. Over 30–88 the chain is Extracellular; it reads ESDYEMREEEKLKAEEIRLKGKYNISSEDYRQLELVIMQSEPHRAGVQWKFAGSFYFAI. An N-linked (GlcNAc...) asparagine glycan is attached at Asn-53. An intramembrane region (pore-forming) is located at residues 89 to 101; that stretch reads TVITTIGYGHAAP. Topologically, residues 102 to 107 are extracellular; sequence GTDAGK. The helical transmembrane segment at 108–128 threads the bilayer; it reads AFCMFYAVLGIPLTLVMFQSL. Residues 129–158 are Cytoplasmic-facing; the sequence is GERMNTFVKYLLKRIKKCCGMHSTDVSMEN. The helical transmembrane segment at 159-179 threads the bilayer; it reads MVTVGFFSCMGTLCIGAAAFS. Residues 180-194 are Extracellular-facing; it reads HYEEWSFFQAYYYCF. Residues 195-207 constitute an intramembrane region (pore-forming); it reads ITLTTIGFGDYVA. At 208–218 the chain is on the extracellular side; that stretch reads LQKNRALQKKP. Residues 219–239 form a helical membrane-spanning segment; sequence LYVAFSFMYILVGLTVIGAFL. Over 240 to 374 the chain is Cytoplasmic; sequence NLVVLRFLTM…HRLMKRRKSI (135 aa).

The protein belongs to the two pore domain potassium channel (TC 1.A.1.8) family. In terms of assembly, homodimer. May form heterodimers with other family members.

Its subcellular location is the cell membrane. PH-dependent, voltage-insensitive, background potassium channel protein. This chain is Potassium channel subfamily K member 9 (kcnk9), found in Xenopus laevis (African clawed frog).